A 923-amino-acid chain; its full sequence is Leucine--tRNA ligase (923 aa).

Residues 41–52 carry the 'HIGH' region motif; sequence PYPSGEGLHVGH. The 'KMSKS' region signature appears at 698 to 702; the sequence is KMSKS. K701 is an ATP binding site.

It belongs to the class-I aminoacyl-tRNA synthetase family.

It is found in the cytoplasm. The catalysed reaction is tRNA(Leu) + L-leucine + ATP = L-leucyl-tRNA(Leu) + AMP + diphosphate. In Amoebophilus asiaticus (strain 5a2), this protein is Leucine--tRNA ligase.